Consider the following 447-residue polypeptide: Transcriptional enhancer factor TEF-4 (447 aa).

Disordered stretches follow at residues 1-46 (MGEP…GVWS) and 183-218 (TPFT…PPAW). Residues 11-20 (DDGSGWTGSE) are compositionally biased toward low complexity. The segment covering 25–40 (EGTGGSEGAGGDGGPD) has biased composition (gly residues). The segment at residues 38–114 (GPDAEGVWSP…QVLARRKSRE (77 aa)) is a DNA-binding region (TEA). Residues 172–447 (WNVPDVKPFS…QHHIYRLVRD (276 aa)) are transcriptional activation. Residues 183 to 206 (TPFTLSLTPPSTDLPGYEPPQALS) are compositionally biased toward low complexity. Over residues 207–216 (PLPPPTPSPP) the composition is skewed to pro residues.

As to quaternary structure, interacts with YAP1 and WWTR1/TAZ.

The protein resides in the nucleus. Transcription factor which plays a key role in the Hippo signaling pathway, a pathway involved in organ size control and tumor suppression by restricting proliferation and promoting apoptosis. The core of this pathway is composed of a kinase cascade wherein MST1/MST2, in complex with its regulatory protein SAV1, phosphorylates and activates LATS1/2 in complex with its regulatory protein MOB1, which in turn phosphorylates and inactivates YAP1 oncoprotein and WWTR1/TAZ. Acts by mediating gene expression of YAP1 and WWTR1/TAZ, thereby regulating cell proliferation, migration and epithelial mesenchymal transition (EMT) induction. Binds to the SPH and GT-IIC 'enhansons' (5'-GTGGAATGT-3'). May be involved in the gene regulation of neural development. Binds to the M-CAT motif. The protein is Transcriptional enhancer factor TEF-4 (TEAD2) of Homo sapiens (Human).